Consider the following 342-residue polypeptide: Farnesyl pyrophosphate synthase 2 (342 aa).

Isopentenyl diphosphate-binding residues include lysine 47, arginine 50, and glutamine 86. Positions 93 and 97 each coordinate Mg(2+). A dimethylallyl diphosphate-binding site is contributed by arginine 102. Arginine 103 lines the isopentenyl diphosphate pocket. 5 residues coordinate dimethylallyl diphosphate: lysine 190, threonine 191, glutamine 229, lysine 246, and lysine 255.

The protein belongs to the FPP/GGPP synthase family. Requires Mg(2+) as cofactor.

The protein localises to the cytoplasm. It catalyses the reaction isopentenyl diphosphate + dimethylallyl diphosphate = (2E)-geranyl diphosphate + diphosphate. It carries out the reaction isopentenyl diphosphate + (2E)-geranyl diphosphate = (2E,6E)-farnesyl diphosphate + diphosphate. It functions in the pathway isoprenoid biosynthesis; farnesyl diphosphate biosynthesis; farnesyl diphosphate from geranyl diphosphate and isopentenyl diphosphate: step 1/1. It participates in isoprenoid biosynthesis; geranyl diphosphate biosynthesis; geranyl diphosphate from dimethylallyl diphosphate and isopentenyl diphosphate: step 1/1. In terms of biological role, catalyzes the sequential condensation of isopentenyl pyrophosphate with the allylic pyrophosphates, dimethylallyl pyrophosphate, and then with the resultant geranylpyrophosphate to the ultimate product farnesyl pyrophosphate. The protein is Farnesyl pyrophosphate synthase 2 (FPS2) of Arabidopsis thaliana (Mouse-ear cress).